A 617-amino-acid polypeptide reads, in one-letter code: MSPQRDRINAFYKDNPHPKGSRIVINREHLMIDRPYVLLAVLFVMFLSLIGLLAIAGIRLHRAAIYTAEIHKSLSTNLDVTNSIEHQVKDVLTPLFKIIGDEVGLRTPQRFTDLVKFISDKIKFLNPDREYDFRDLTWCINPPERIKLDYDQYCADVAAEELMNALVNSTLLETRTTNQFLAVSKGNCSGPTTIRGQFSNMSLSLLDLYLGRGYNVSSIVTMTSQGMYGGTYLVEKPNLSSKRSELSQLSMYRVFEVGVIRNPGLGAPVFHMTNYLEQPVSNDLSNCMVALGELKLAALCHREDSITIPYQGSGKGVSFQLVKLGVWKSPTDMQSWVTLSTDDPVIDRLYLSSHRGVIADNQAKWAVPTTRTDDKLRMETCFQQACKGKIQALCENPEWAPLKDNRIPSYGVLSVDLSLTVELKIKIASGFGPLITHGSGMDLYKSNHNNVYWLTIPPMKNLALGVINTLEWIPRFKVSPYLFNVPIKEAGEDCHAPTYLPAEVDGDVKLSSNLVILPGQDLQYVLATYDTSRVEHAVVYYVYSPSRSFSYFYPFRLPIKGVPIELQVECFTWDQKLWCRHFCVLADSESGGHITHSGMVGMGVSCTVTREDGTNRR.

Residues 1-37 (MSPQRDRINAFYKDNPHPKGSRIVINREHLMIDRPYV) are Intravirion-facing. Positions 1–154 (MSPQRDRINA…RIKLDYDQYC (154 aa)) are stalk. Residues 38–58 (LLAVLFVMFLSLIGLLAIAGI) form a helical; Signal-anchor for type II membrane protein membrane-spanning segment. Residues 59–617 (RLHRAAIYTA…VTREDGTNRR (559 aa)) are Virion surface-facing. 5 N-linked (GlcNAc...) asparagine; by host glycosylation sites follow: Asn-168, Asn-187, Asn-200, Asn-215, and Asn-238. Cystine bridges form between Cys-188/Cys-606, Cys-287/Cys-300, Cys-381/Cys-494, Cys-386/Cys-394, and Cys-570/Cys-579. The interaction with host NECTIN4 receptor stretch occupies residues 458–543 (PMKNLALGVI…VEHAVVYYVY (86 aa)).

This sequence belongs to the paramyxoviruses hemagglutinin-neuraminidase family. Non-sialidase subfamily. In terms of assembly, homodimer; disulfide-linked. Further forms homotetramer (dimer of dimers). Interacts (via C-terminus) with human NECTIN4 (via N-terminus); this interaction allows attachment to the respiratory epithelium and viral entry. Interacts (via C-terminus) with human SLAMF1/CD150 (via N-terminus); this interaction allows attachment and viral entry into the CD150-expressing immune cells. Interacts with human CD46 antigen.

It is found in the virion membrane. The protein resides in the host cell membrane. In terms of biological role, attaches the virus to the human SLAMF1/CD150 receptor for entry into host dendritic cells, macrophages, activated memory T cells and naive or memory B cells, thereby explaining the long immunosuppression that follows infection. In the respiratory airways, binds to the NECTIN4 receptor for entry into the host cell. Binding of H protein to the receptor induces a conformational change that allows the F protein to trigger virion/cell membranes fusion. The vaccine and laboratory-adapted strains use host CD46 as an alternate receptor. The high degree of interaction between H and CD46 results in down-regulation of the latter from the surface of infected cells, rendering them more sensitive to c3b-mediated complement lysis. This is Hemagglutinin glycoprotein (H) from Homo sapiens (Human).